Consider the following 119-residue polypeptide: DNA-directed RNA polymerase subunit omega (119 aa).

This sequence belongs to the RNA polymerase subunit omega family. As to quaternary structure, the RNAP catalytic core consists of 2 alpha, 1 beta, 1 beta' and 1 omega subunit. When a sigma factor is associated with the core the holoenzyme is formed, which can initiate transcription.

It catalyses the reaction RNA(n) + a ribonucleoside 5'-triphosphate = RNA(n+1) + diphosphate. Promotes RNA polymerase assembly. Latches the N- and C-terminal regions of the beta' subunit thereby facilitating its interaction with the beta and alpha subunits. The protein is DNA-directed RNA polymerase subunit omega of Caulobacter sp. (strain K31).